The chain runs to 714 residues: Protein HAPLESS 2-B (714 aa).

The first 33 residues, 1–33 (MAPRRRRRAARSSRPLLLALLAAAVNNFAPAGG), serve as a signal peptide directing secretion. The Extracellular portion of the chain corresponds to 34-552 (VEVLAKSRLE…FFTGTTCSTR (519 aa)). 7 disulfides stabilise this stretch: Cys-45/Cys-59, Cys-134/Cys-164, Cys-146/Cys-194, Cys-165/Cys-321, Cys-167/Cys-177, Cys-304/Cys-328, and Cys-441/Cys-479. The helical transmembrane segment at 553 to 573 (CWSFLKFVIHGLLLVAVLWLL) threads the bilayer. At 574-714 (HRKGLFDPLY…HGDRRHHAWH (141 aa)) the chain is on the cytoplasmic side. Positions 597-619 (RARRRHKRAHSHRHSHHHDAHKR) are disordered. Over residues 598–619 (ARRRHKRAHSHRHSHHHDAHKR) the composition is skewed to basic residues.

It belongs to the HAP2/GCS1 family.

The protein localises to the endoplasmic reticulum membrane. The protein resides in the cell membrane. In terms of biological role, required for male fertility. Plays a role in pollen tube guidance and successful gamete attachment. Essential for the fusion of gametes during double fertilization, where one male gamete fuses with the egg to produce a zygote, and another male gamete fuses with the central cell to produce the endosperm. Mediates the fusion of cell membranes. Not required for pollen tube outgrowth. The protein is Protein HAPLESS 2-B (HAP2B) of Oryza sativa subsp. japonica (Rice).